Reading from the N-terminus, the 429-residue chain is Enolase (429 aa).

(2R)-2-phosphoglycerate is bound at residue Gln165. Glu207 (proton donor) is an active-site residue. Mg(2+) is bound by residues Asp244, Glu287, and Asp314. Positions 339, 368, 369, and 390 each coordinate (2R)-2-phosphoglycerate. Lys339 acts as the Proton acceptor in catalysis.

It belongs to the enolase family. It depends on Mg(2+) as a cofactor.

It is found in the cytoplasm. Its subcellular location is the secreted. It localises to the cell surface. The enzyme catalyses (2R)-2-phosphoglycerate = phosphoenolpyruvate + H2O. Its pathway is carbohydrate degradation; glycolysis; pyruvate from D-glyceraldehyde 3-phosphate: step 4/5. Its function is as follows. Catalyzes the reversible conversion of 2-phosphoglycerate (2-PG) into phosphoenolpyruvate (PEP). It is essential for the degradation of carbohydrates via glycolysis. This is Enolase from Roseiflexus castenholzii (strain DSM 13941 / HLO8).